We begin with the raw amino-acid sequence, 526 residues long: Peptide chain release factor 3 (526 aa).

One can recognise a tr-type G domain in the interval 9 to 277 (DKRRTFAIIS…GIVEWAPKPL (269 aa)). Residues 18–25 (SHPDAGKT), 86–90 (DTPGH), and 140–143 (NKLD) each bind GTP.

The protein belongs to the TRAFAC class translation factor GTPase superfamily. Classic translation factor GTPase family. PrfC subfamily.

The protein resides in the cytoplasm. Functionally, increases the formation of ribosomal termination complexes and stimulates activities of RF-1 and RF-2. It binds guanine nucleotides and has strong preference for UGA stop codons. It may interact directly with the ribosome. The stimulation of RF-1 and RF-2 is significantly reduced by GTP and GDP, but not by GMP. This is Peptide chain release factor 3 from Shewanella putrefaciens (strain CN-32 / ATCC BAA-453).